Reading from the N-terminus, the 151-residue chain is Large ribosomal subunit protein bL9 (151 aa).

The protein belongs to the bacterial ribosomal protein bL9 family.

Its function is as follows. Binds to the 23S rRNA. This chain is Large ribosomal subunit protein bL9, found in Azoarcus sp. (strain BH72).